The primary structure comprises 188 residues: MGVDIRHNKDRKVRRKEPKSQDIYLRLLVKLYRFLARRTNSTFNQVVLKRLFMSRTNRPPLSLSRMIRKMKLPGRENKTAVVVGTITDDVRILEVPKLKVCALRVSSRARSRILKAGGKILTFDQLALESPKGRGTVLLSGPRKGREVYRHFGKAPGTPHSHTKPYVRSKGRKFERARGRRASRGYKN.

Lys119 is covalently cross-linked (Glycyl lysine isopeptide (Lys-Gly) (interchain with G-Cter in SUMO2)). Phosphoserine is present on Ser130. The segment at 150–188 (RHFGKAPGTPHSHTKPYVRSKGRKFERARGRRASRGYKN) is disordered. Residue Thr158 is modified to Phosphothreonine. 2 stretches are compositionally biased toward basic residues: residues 161 to 171 (SHTKPYVRSKG) and 178 to 188 (RGRRASRGYKN). Residue Lys164 forms a Glycyl lysine isopeptide (Lys-Gly) (interchain with G-Cter in SUMO2) linkage.

Belongs to the eukaryotic ribosomal protein eL18 family. As to quaternary structure, component of the large ribosomal subunit.

The protein localises to the cytoplasm. The protein resides in the cytosol. It is found in the rough endoplasmic reticulum. Functionally, component of the large ribosomal subunit. The ribosome is a large ribonucleoprotein complex responsible for the synthesis of proteins in the cell. In Rattus norvegicus (Rat), this protein is Large ribosomal subunit protein eL18 (Rpl18).